Here is a 361-residue protein sequence, read N- to C-terminus: Spermidine/putrescine import ATP-binding protein PotA (361 aa).

The ABC transporter domain occupies 4–234 (LEIKNVVKRF…PKNRFVADFL (231 aa)). 36 to 43 (GPSGCGKT) lines the ATP pocket.

The protein belongs to the ABC transporter superfamily. Spermidine/putrescine importer (TC 3.A.1.11.1) family. The complex is composed of two ATP-binding proteins (PotA), two transmembrane proteins (PotB and PotC) and a solute-binding protein (PotD).

The protein resides in the cell inner membrane. The catalysed reaction is ATP + H2O + polyamine-[polyamine-binding protein]Side 1 = ADP + phosphate + polyamineSide 2 + [polyamine-binding protein]Side 1.. Its function is as follows. Part of the ABC transporter complex PotABCD involved in spermidine/putrescine import. Responsible for energy coupling to the transport system. The chain is Spermidine/putrescine import ATP-binding protein PotA from Chromobacterium violaceum (strain ATCC 12472 / DSM 30191 / JCM 1249 / CCUG 213 / NBRC 12614 / NCIMB 9131 / NCTC 9757 / MK).